Reading from the N-terminus, the 407-residue chain is Arginine biosynthesis bifunctional protein ArgJ (407 aa).

Positions 155, 181, 192, 278, 402, and 407 each coordinate substrate. Catalysis depends on threonine 192, which acts as the Nucleophile.

It belongs to the ArgJ family. In terms of assembly, heterotetramer of two alpha and two beta chains.

The protein resides in the cytoplasm. The enzyme catalyses N(2)-acetyl-L-ornithine + L-glutamate = N-acetyl-L-glutamate + L-ornithine. It catalyses the reaction L-glutamate + acetyl-CoA = N-acetyl-L-glutamate + CoA + H(+). It participates in amino-acid biosynthesis; L-arginine biosynthesis; L-ornithine and N-acetyl-L-glutamate from L-glutamate and N(2)-acetyl-L-ornithine (cyclic): step 1/1. It functions in the pathway amino-acid biosynthesis; L-arginine biosynthesis; N(2)-acetyl-L-ornithine from L-glutamate: step 1/4. Functionally, catalyzes two activities which are involved in the cyclic version of arginine biosynthesis: the synthesis of N-acetylglutamate from glutamate and acetyl-CoA as the acetyl donor, and of ornithine by transacetylation between N(2)-acetylornithine and glutamate. The sequence is that of Arginine biosynthesis bifunctional protein ArgJ from Thiobacillus denitrificans (strain ATCC 25259 / T1).